The sequence spans 307 residues: Ribosomal RNA small subunit methyltransferase H (307 aa).

S-adenosyl-L-methionine is bound by residues Gly31 to His33, Asp51, Tyr83, Asp97, and Gln104.

This sequence belongs to the methyltransferase superfamily. RsmH family.

It localises to the cytoplasm. The enzyme catalyses cytidine(1402) in 16S rRNA + S-adenosyl-L-methionine = N(4)-methylcytidine(1402) in 16S rRNA + S-adenosyl-L-homocysteine + H(+). Specifically methylates the N4 position of cytidine in position 1402 (C1402) of 16S rRNA. The chain is Ribosomal RNA small subunit methyltransferase H from Buchnera aphidicola subsp. Cinara cedri (strain Cc).